The sequence spans 502 residues: Glycerol kinase (502 aa).

T14 contributes to the ADP binding site. T14, T15, and S16 together coordinate ATP. T14 serves as a coordination point for sn-glycerol 3-phosphate. ADP is bound at residue R18. Sn-glycerol 3-phosphate is bound by residues R84, E85, and Y136. Glycerol-binding residues include R84, E85, and Y136. Residue H232 is modified to Phosphohistidine; by HPr. Residue D246 coordinates sn-glycerol 3-phosphate. D246 and Q247 together coordinate glycerol. T268 and G311 together coordinate ADP. T268, G311, Q315, and G412 together coordinate ATP. ADP-binding residues include G412 and N416.

Belongs to the FGGY kinase family. Homotetramer and homodimer (in equilibrium). The phosphoenolpyruvate-dependent sugar phosphotransferase system (PTS), including enzyme I, and histidine-containing protein (HPr) are required for the phosphorylation, which leads to the activation of the enzyme.

It catalyses the reaction glycerol + ATP = sn-glycerol 3-phosphate + ADP + H(+). Its pathway is polyol metabolism; glycerol degradation via glycerol kinase pathway; sn-glycerol 3-phosphate from glycerol: step 1/1. Its activity is regulated as follows. Activated by phosphorylation and inhibited by fructose 1,6-bisphosphate (FBP). In terms of biological role, key enzyme in the regulation of glycerol uptake and metabolism. Catalyzes the phosphorylation of glycerol to yield sn-glycerol 3-phosphate. The sequence is that of Glycerol kinase from Streptococcus gordonii (strain Challis / ATCC 35105 / BCRC 15272 / CH1 / DL1 / V288).